The chain runs to 322 residues: MTFARIAGTGSYLPDNIVTNRDLEQKVETSDQWIRERTGIEQRHIALPGQSTVDLAEQAALNAIEAAGIEATDIDLIVFATTTPDKVFPSCACILQARLGIQGCPAFDIQAVCSGFVYALATAEKFIRTGSSKKALVIGAEVFSRILNWEDRTTCVLFGDGAGAVVLEASEETGILSTHLHADGRYEELLHVPCGIANDFDAVKAGQAFVEMKGNEVFKVAVNTLGRIVDETLEANQMQKSEIDWLVPHQANLRIIAATARKLDMPMDQVVVTVNRHGNTSAASIPLALDEAVRDGRIQRGQVVLLEAFGGGFTWGSALLRY.

Active-site residues include cysteine 113 and histidine 249. The interval glutamine 250–arginine 254 is ACP-binding. Asparagine 279 is a catalytic residue.

This sequence belongs to the thiolase-like superfamily. FabH family. As to quaternary structure, homodimer.

It is found in the cytoplasm. The enzyme catalyses malonyl-[ACP] + acetyl-CoA + H(+) = 3-oxobutanoyl-[ACP] + CO2 + CoA. The protein operates within lipid metabolism; fatty acid biosynthesis. Catalyzes the condensation reaction of fatty acid synthesis by the addition to an acyl acceptor of two carbons from malonyl-ACP. Catalyzes the first condensation reaction which initiates fatty acid synthesis and may therefore play a role in governing the total rate of fatty acid production. Possesses both acetoacetyl-ACP synthase and acetyl transacylase activities. Its substrate specificity determines the biosynthesis of branched-chain and/or straight-chain of fatty acids. This is Beta-ketoacyl-[acyl-carrier-protein] synthase III from Marinobacter nauticus (strain ATCC 700491 / DSM 11845 / VT8) (Marinobacter aquaeolei).